Reading from the N-terminus, the 1645-residue chain is Histone-lysine N-methyltransferase set-26 (1645 aa).

Disordered stretches follow at residues 1 to 82 (MADG…QQIP), 109 to 132 (EPAA…RPTE), 200 to 228 (DAVG…SVAP), 417 to 606 (TPEQ…VLRP), and 651 to 789 (TGQS…DEAA). Composition is skewed to low complexity over residues 16–31 (EQPP…AEPI) and 67–82 (QEFY…QQIP). The span at 207–228 (PGTQYRRNQQTGGGLPSTSVAP) shows a compositional bias: polar residues. 2 stretches are compositionally biased toward low complexity: residues 429–443 (RQRA…AAQR) and 453–467 (RPGA…PSMA). Residues 559–578 (MTQEEKNAHFARLTTDKEKP) are compositionally biased toward basic and acidic residues. Pro residues predominate over residues 592-603 (PHVPPPPPPPLV). A compositionally biased stretch (polar residues) spans 651–675 (TGQSGSSAAARQRTVSGSAARAQTY). Basic residues-rich tracts occupy residues 684 to 699 (QHHH…RHSS) and 731 to 741 (HRPRGRPKGTR). Residues 780-789 (SESEGIDEAA) show a composition bias toward acidic residues. The PHD-type zinc finger occupies 794–842 (TMRCHCGMDHGDGDTIECEGCKTWQHMACMGLTLKSNTSKYKCEMCLPR). The interval 865–904 (AAKKQKRKSEPVEQKQKSQPSTSRKSAPMALQQQPAEPRV) is disordered. Residues 881–899 (KSQPSTSRKSAPMALQQQP) show a composition bias toward polar residues. One can recognise an SET domain in the interval 973-1064 (MSNEVKRQPG…RNTEVTLPFD (92 aa)). Residues 1099–1172 (RHRAMDHKKR…EAKERKKMEV (74 aa)) show a composition bias toward basic and acidic residues. 3 disordered regions span residues 1099 to 1333 (RHRA…SKNV), 1371 to 1536 (SGLL…STEG), and 1548 to 1645 (PLDD…TRWN). A coiled-coil region spans residues 1103–1217 (MDHKKREAEE…GKRKEARRRS (115 aa)). A compositionally biased stretch (low complexity) spans 1173-1183 (EASAAAAPESS). Over residues 1188 to 1210 (AREERRIQQAEEMFRRQEEEGKR) the composition is skewed to basic and acidic residues. Polar residues-rich tracts occupy residues 1258–1268 (TTQPSTSSFAT) and 1300–1311 (TVATPKDTTASN). 3 stretches are compositionally biased toward basic and acidic residues: residues 1382–1427 (SEVR…KKAN), 1434–1450 (KSEK…EKKP), and 1468–1485 (KKTE…ESSS). Polar residues predominate over residues 1554 to 1565 (SSSNTAPTTTIA).

The protein belongs to the class V-like SAM-binding methyltransferase superfamily. In terms of tissue distribution, expressed both in the germline and in somatic tissues.

Its subcellular location is the nucleus. It carries out the reaction L-lysyl(9)-[histone H3] + 3 S-adenosyl-L-methionine = N(6),N(6),N(6)-trimethyl-L-lysyl(9)-[histone H3] + 3 S-adenosyl-L-homocysteine + 3 H(+). Histone methyltransferase that mediates trimethylation of 'Lys-9' of histone H3 in vitro. Involved in transcriptional regulation. Plays a role in the negative regulation of lifespan and in heat resistance. Together with set-9, negatively regulates lifespan in a germline-independent, partially daf-16-dependent fashion. Together with set-9, plays a role in germline development and maintenance and might play a role in the restriction of the trimethylation mark on histone H3 'Lys-4'(H3K4me3) to target genes specifically in the germline. Together with spr-5, required for transgenerational fertility. This chain is Histone-lysine N-methyltransferase set-26, found in Caenorhabditis elegans.